A 255-amino-acid chain; its full sequence is Pimeloyl-[acyl-carrier protein] methyl ester esterase (255 aa).

One can recognise an AB hydrolase-1 domain in the interval leucine 16 to proline 241. Substrate-binding positions include tryptophan 22, serine 81 to leucine 82, and phenylalanine 142 to glutamine 146. Residue serine 81 is the Nucleophile of the active site. Active-site residues include aspartate 206 and histidine 234. Histidine 234 serves as a coordination point for substrate.

Belongs to the AB hydrolase superfamily. Carboxylesterase BioH family. As to quaternary structure, monomer.

It is found in the cytoplasm. The catalysed reaction is 6-carboxyhexanoyl-[ACP] methyl ester + H2O = 6-carboxyhexanoyl-[ACP] + methanol + H(+). Its pathway is cofactor biosynthesis; biotin biosynthesis. Functionally, the physiological role of BioH is to remove the methyl group introduced by BioC when the pimeloyl moiety is complete. It allows to synthesize pimeloyl-ACP via the fatty acid synthetic pathway through the hydrolysis of the ester bonds of pimeloyl-ACP esters. Also displays a weak thioesterase activity. Can form a complex with CoA, and may be involved in the condensation of CoA and pimelic acid into pimeloyl-CoA, a precursor in biotin biosynthesis. In Serratia marcescens, this protein is Pimeloyl-[acyl-carrier protein] methyl ester esterase.